The primary structure comprises 125 residues: Calcitonin receptor-stimulating peptide 3 (125 aa).

The first 25 residues, 1–25, serve as a signal peptide directing secretion; sequence MGFWKFPPFLILSILVLYQAGMLHA. The propeptide occupies 26 to 79; it reads APFRMALGSSFDSATLTEEEMSLLLVAMVKDYVQMKATVLEQETEDFSITTQER. Cysteine 81 and cysteine 86 are oxidised to a cystine. The residue at position 116 (leucine 116) is a Leucine amide. A propeptide spanning residues 122–125 is cleaved from the precursor; it reads QPQA.

Belongs to the calcitonin family. Mainly expressed in the thyroid gland and CNS. Found in the nerve cells of cerebrum, hippocampus, hypothalamus, pons/midbrain and thalamus.

The protein localises to the secreted. The polypeptide is Calcitonin receptor-stimulating peptide 3 (CRSP3) (Sus scrofa (Pig)).